The following is a 185-amino-acid chain: Glycerol-3-phosphate acyltransferase 4 (185 aa).

6 helical membrane-spanning segments follow: residues 1–21 (MPLL…AYLA), 47–67 (LGRG…SLAI), 69–89 (LALA…AAVL), 113–133 (LLIA…VLLF), 137–157 (VIAA…LYGL), and 158–178 (PGGV…THFI).

The protein belongs to the PlsY family. In terms of assembly, probably interacts with PlsX.

The protein localises to the cell membrane. The catalysed reaction is an acyl phosphate + sn-glycerol 3-phosphate = a 1-acyl-sn-glycero-3-phosphate + phosphate. It participates in lipid metabolism; phospholipid metabolism. In terms of biological role, catalyzes the transfer of an acyl group from acyl-phosphate (acyl-PO(4)) to glycerol-3-phosphate (G3P) to form lysophosphatidic acid (LPA). This enzyme utilizes acyl-phosphate as fatty acyl donor, but not acyl-CoA or acyl-ACP. This is Glycerol-3-phosphate acyltransferase 4 from Dehalococcoides mccartyi (strain ATCC BAA-2266 / KCTC 15142 / 195) (Dehalococcoides ethenogenes (strain 195)).